We begin with the raw amino-acid sequence, 1004 residues long: 2-oxoglutarate dehydrogenase E1 component (1004 aa).

The protein belongs to the alpha-ketoglutarate dehydrogenase family. As to quaternary structure, homodimer. Part of the 2-oxoglutarate dehydrogenase (OGDH) complex composed of E1 (2-oxoglutarate dehydrogenase), E2 (dihydrolipoamide succinyltransferase) and E3 (dihydrolipoamide dehydrogenase); the complex contains multiple copies of the three enzymatic components (E1, E2 and E3). The cofactor is thiamine diphosphate.

It catalyses the reaction N(6)-[(R)-lipoyl]-L-lysyl-[protein] + 2-oxoglutarate + H(+) = N(6)-[(R)-S(8)-succinyldihydrolipoyl]-L-lysyl-[protein] + CO2. E1 component of the 2-oxoglutarate dehydrogenase (OGDH) complex which catalyzes the decarboxylation of 2-oxoglutarate, the first step in the conversion of 2-oxoglutarate to succinyl-CoA and CO(2). The polypeptide is 2-oxoglutarate dehydrogenase E1 component (Brucella abortus (strain S19)).